A 453-amino-acid polypeptide reads, in one-letter code: Iron-sulfur cluster assembly SufBD family protein slr0076 (453 aa).

This sequence belongs to the iron-sulfur cluster assembly SufBD family.

This is Iron-sulfur cluster assembly SufBD family protein slr0076 from Synechocystis sp. (strain ATCC 27184 / PCC 6803 / Kazusa).